An 85-amino-acid chain; its full sequence is Metallothionein-like protein 4B (85 aa).

The segment at 1–20 is disordered; the sequence is MADTGKGSASASCNDRCGCP.

Belongs to the metallothionein superfamily. Type 15 family. As to expression, expressed specifically in seeds.

The protein localises to the cytoplasm. Its subcellular location is the nucleus. It localises to the cell membrane. Its function is as follows. Metallothioneins have a high content of cysteine residues that bind various heavy metals. Functions as a metal chelator of copper (Cu) and zinc (Zn). Plays a role in storing and distributing Zn ion in seed. The sequence is that of Metallothionein-like protein 4B (MT4B) from Arabidopsis thaliana (Mouse-ear cress).